Here is a 408-residue protein sequence, read N- to C-terminus: Na(+)-translocating NADH-quinone reductase subunit F (408 aa).

The chain crosses the membrane as a helical span at residues 4–24 (IYLGVGMFTIIVLVLVAIIMF). A 2Fe-2S ferredoxin-type domain is found at 33 to 127 (GDVEILINDD…DMEIELPEEV (95 aa)). [2Fe-2S] cluster contacts are provided by cysteine 70, cysteine 76, cysteine 79, and cysteine 111. One can recognise an FAD-binding FR-type domain in the interval 130-270 (IRKWDCTVKS…SGPFGEFFAK (141 aa)).

Belongs to the NqrF family. In terms of assembly, composed of six subunits; NqrA, NqrB, NqrC, NqrD, NqrE and NqrF. It depends on [2Fe-2S] cluster as a cofactor. FAD is required as a cofactor.

It is found in the cell inner membrane. It carries out the reaction a ubiquinone + n Na(+)(in) + NADH + H(+) = a ubiquinol + n Na(+)(out) + NAD(+). NQR complex catalyzes the reduction of ubiquinone-1 to ubiquinol by two successive reactions, coupled with the transport of Na(+) ions from the cytoplasm to the periplasm. The first step is catalyzed by NqrF, which accepts electrons from NADH and reduces ubiquinone-1 to ubisemiquinone by a one-electron transfer pathway. The chain is Na(+)-translocating NADH-quinone reductase subunit F from Idiomarina loihiensis (strain ATCC BAA-735 / DSM 15497 / L2-TR).